We begin with the raw amino-acid sequence, 709 residues long: MFEKPVVKSFQYGNHTVTLETGVMARQATAAVMASMDDTSVFVSVVAKKEAVAGQDFFPLTVNYQERTYAAGKIPGGFFKREGRPSEGETLTARLIDRPIRPLFPSAFKNEVQVIATVVSINPDVNPDMITMIATSAALSIAGVPFNGPIGAARVGHINGELVLNPSNTELANSKLDLVVSGTEAAVLMVESEADNLSEEEMLSAVVFGHDQQQVVIKAINEFAAEVATPSWNWEAPVVNAELKAQVAELAETRLSEAYQITEKMARYEQVGAIKSEVVAALLVQNEALDEREIRGMLGALEKNVVRSRIIAGHPRIDGREKDMVRALDVRTGVLPRTHGSALFTRGETQALVTATLGTQRDAQIIDSLMGEKKDHFLLHYNFPPYCVGETGFVGSPKRREIGHGKLAKRGIAAVMPSVEEFPYTVRVVSEITESNGSSSMASVCGTSLALMDAGVPIKASVAGIAMGLVKEGDDFVVLSDILGDEDHLGDMDFKVAGTNAGITALQMDIKIEGITKEIMQIALNQAQGARKHILTVMDEAISGAREDISQYAPRIHTMKISSDKIKDVIGKGGAVIRALCEETGTTIEIEDDGTIKIAATEGAAAKEAIRRIEEITAEVEVGKIYPGKVMRIVDFGAFVTVLGPKEGLVHISQIAEERIEKVADHLQVGQEVQTKVLEIDRQGRIRLSIKEATAELNPVAATEVKDAE.

Mg(2+) is bound by residues aspartate 487 and aspartate 493. The 60-residue stretch at 554–613 (PRIHTMKISSDKIKDVIGKGGAVIRALCEETGTTIEIEDDGTIKIAATEGAAAKEAIRRI) folds into the KH domain. Residues 623–691 (GKIYPGKVMR…RQGRIRLSIK (69 aa)) form the S1 motif domain.

The protein belongs to the polyribonucleotide nucleotidyltransferase family. As to quaternary structure, component of the RNA degradosome, which is a multiprotein complex involved in RNA processing and mRNA degradation. Mg(2+) serves as cofactor.

The protein resides in the cytoplasm. The catalysed reaction is RNA(n+1) + phosphate = RNA(n) + a ribonucleoside 5'-diphosphate. In terms of biological role, involved in mRNA degradation. Catalyzes the phosphorolysis of single-stranded polyribonucleotides processively in the 3'- to 5'-direction. The protein is Polyribonucleotide nucleotidyltransferase of Aliivibrio salmonicida (strain LFI1238) (Vibrio salmonicida (strain LFI1238)).